The sequence spans 819 residues: USP6 N-terminal-like protein (819 aa).

Methionine 1 is subject to N-acetylmethionine. A Rab-GAP TBC domain is found at 100–292 (GIPLQLRGEV…RIWDIYIFEG (193 aa)). The segment covering 355–367 (DLPEPGKEDEYPK) has biased composition (basic and acidic residues). 2 disordered regions span residues 355–498 (DLPE…ERTT) and 513–678 (LPVA…SRPT). Phosphoserine is present on residues serine 389, serine 394, and serine 398. 2 stretches are compositionally biased toward basic and acidic residues: residues 399–414 (SRRE…EHSP) and 432–449 (KSVD…ESQR). Over residues 464-476 (HAAANQNSNAISN) the composition is skewed to low complexity. Basic and acidic residues-rich tracts occupy residues 477-489 (VRKE…RKPS) and 533-542 (KALDGGEGKR). Phosphoserine occurs at positions 544 and 547. Positions 556-571 (ESEHGASAEEGPERTH) are enriched in basic and acidic residues. Serine 574, serine 631, serine 644, serine 648, serine 665, serine 669, and serine 704 each carry phosphoserine. The span at 642-655 (FVSTQISPRPQINP) shows a compositional bias: polar residues. Tyrosine 717 bears the Phosphotyrosine mark. Residues 788–802 (ASPPGYPYAGPSPSA) show a composition bias toward low complexity. Positions 788–807 (ASPPGYPYAGPSPSAHHYRN) are disordered.

Interacts with EPS8.

The protein resides in the golgi apparatus. It is found in the cytoplasmic vesicle. In terms of biological role, acts as a GTPase-activating protein for RAB5A and RAB43. Involved in receptor trafficking. In complex with EPS8 inhibits internalization of EGFR. Involved in retrograde transport from the endocytic pathway to the Golgi apparatus. Involved in the transport of Shiga toxin from early and recycling endosomes to the trans-Golgi network. Required for structural integrity of the Golgi complex. The chain is USP6 N-terminal-like protein (Usp6nl) from Mus musculus (Mouse).